Consider the following 727-residue polypeptide: Testis anion transporter 1 (727 aa).

The Cytoplasmic portion of the chain corresponds to 1–23 (MLTIFPFLEWMCMYRLKDWLLGD). Residues 24-44 (LLAGISVGLVQVPQGLTLSLL) traverse the membrane as a helical segment. The Extracellular segment spans residues 45 to 47 (ARQ). A helical membrane pass occupies residues 48-68 (LIPPLNIAYAAFCSSVIYVIF). Residues 69-74 (GSCHQM) are Cytoplasmic-facing. The helical transmembrane segment at 75 to 95 (SIGSFFLVSALLINVLKISPL) threads the bilayer. Residues 96 to 130 (NNGHLVMGSFLKDEFSAPSYLMGYNKSLSVVATTT) are Extracellular-facing. An N-linked (GlcNAc...) asparagine glycan is attached at Asn120. A helical membrane pass occupies residues 131 to 151 (FLTGIIQLIMGVLGLGFIATY). Topologically, residues 152 to 160 (LPESAMSAY) are cytoplasmic. Residues 161–181 (LAAVALHIMLSQLTCIFGIMI) form a helical membrane-spanning segment. At 182-198 (SFHAGPISFFYDIINYC) the chain is on the extracellular side. Residues 199-219 (VALPKANSTSILLFLTVVVAL) traverse the membrane as a helical segment. Residues 220-235 (RINKCIRISFNQYPIE) are Cytoplasmic-facing. The helical transmembrane segment at 236-256 (FPMELFLIIGFTVIGNKITMA) threads the bilayer. Topologically, residues 257 to 283 (TETSQTLIDMIPYSFLFPVTPDFSVLP) are extracellular. Residues 284–304 (KIILQAISLSLVSSFLLVFLG) form a helical membrane-spanning segment. Topologically, residues 305–360 (KKIASLHNYSVNSNQDLIAIGLCNVVSSFFRSCVFTGAVARTIIQDKSGGRQQFAS) are cytoplasmic. A helical transmembrane segment spans residues 361 to 381 (LVGAGVMLLLMVKMGHFFYAL). Residues 382 to 383 (PN) lie on the Extracellular side of the membrane. Residues 384–404 (AVLAGIILSNVVPYLETISNL) traverse the membrane as a helical segment. Residues 405 to 424 (PSLWRQDQYDCALWMMTFSS) are Cytoplasmic-facing. Residues 425-445 (SIFLGLDIGLIISVVSAFFIT) form a helical membrane-spanning segment. Residues 446 to 727 (SVRSHRAKIL…LPSFHLQHIF (282 aa)) are Extracellular-facing. Positions 471-722 (DYREIITIPG…NSLSRLPSFH (252 aa)) constitute an STAS domain. The interaction with RACGAP1 stretch occupies residues 592–727 (TVSSMSQKNQ…LPSFHLQHIF (136 aa)).

It belongs to the SLC26A/SulP transporter (TC 2.A.53) family. As to quaternary structure, interacts with RACGAP1. Interacts with CFTR; stimulates anion transport activity of CFTR. N-glycosylated.

It localises to the membrane. It carries out the reaction sulfate(out) + chloride(in) = sulfate(in) + chloride(out). The catalysed reaction is oxalate(in) + chloride(out) = oxalate(out) + chloride(in). Functionally, antiporter that mediates the exchange of sulfate and oxalate against chloride ions across a membrane. Stimulates anion transport activity of CFTR. May cooperate with CFTR in the regulation of chloride and bicarbonate ions fluxes required for activation of the ADCY10/PKA pathway during sperm motility and sperm capacitation. May play a role in sperm tail differentiation and motility and hence male fertility. This is Testis anion transporter 1 from Macaca fascicularis (Crab-eating macaque).